Reading from the N-terminus, the 100-residue chain is Small ribosomal subunit protein uS14c (100 aa).

This sequence belongs to the universal ribosomal protein uS14 family. As to quaternary structure, part of the 30S ribosomal subunit.

The protein localises to the plastid. The protein resides in the chloroplast. Binds 16S rRNA, required for the assembly of 30S particles. The chain is Small ribosomal subunit protein uS14c from Pleurastrum terricola (Filamentous green alga).